The chain runs to 615 residues: MHCMAVRHFAPSSSLSIFSSTNINNHFFGREIFTPKTSNITTKKSRSRPNCNPIQCSLAKSPSSDTSTIVRRSANYDPPIWSFDFIQSLPCKYKGEPYTSRSNKLKEEVKKMLVGMENSLVQLELIDTLQRLGISYHFENEIISILKEYFTNISTNKNPKYDLYATALEFRLLREYGYAIPQEIFNDFKDETGKFKASIKNDDIKGVLALYEASFYVKNGENILEEARVFTTEYLKRYVMMIDQNIILNDNMAILVRHALEMPLHWRTIRAEAKWFIEEYEKTQDKNGTLLEFAKLDFNMLQSIFQEDLKHVSRWWEHSELGKNKMVYARDRLVEAFLWQVGVRFEPQFSHFRRISARIYALITIIDDIYDVYGTLEELELFTKAVERWDAKTIHELPDYMKLPFFTLFNTVNEMAYDVLEEHNFVTVEYLKNSWAELCRCYLEEAKWFYSGYKPTLKKYIENASLSIGGQIIFVYAFFSLTKSITNEALESLQEGHHAACRQGSLMLRLADDLGTLSDEMKRGDVPKSIQCYMHDTGASEDEAREHIKFLISEIWKEMNDEDEYNSIFSKEFVQACKNLGRMSLFMYQHGDGHASQDSHSRKRISDLIINPIPL.

The transit peptide at 1 to 55 directs the protein to the chloroplast; the sequence is MHCMAVRHFAPSSSLSIFSSTNINNHFFGREIFTPKTSNITTKKSRSRPNCNPIQ. (2E)-geranyl diphosphate-binding residues include R330, D367, D371, R509, and D512. Mg(2+) contacts are provided by D367 and D371. The DDXXD motif motif lies at 367–371; that stretch reads DDIYD. Mg(2+) is bound by residues D512, T516, and E520.

Belongs to the terpene synthase family. Tpsb subfamily. Requires Mg(2+) as cofactor. Mn(2+) serves as cofactor. The cofactor is K(+). Trichome.

The protein localises to the plastid. Its subcellular location is the chloroplast. The catalysed reaction is (2E)-geranyl diphosphate = (1R,5R)-alpha-pinene + diphosphate. It carries out the reaction (2E)-geranyl diphosphate = (1R,5R)-beta-pinene + diphosphate. It catalyses the reaction (2E)-geranyl diphosphate = (4S)-limonene + diphosphate. The enzyme catalyses (2E)-geranyl diphosphate = beta-myrcene + diphosphate. The protein operates within secondary metabolite biosynthesis; terpenoid biosynthesis. It participates in terpene metabolism; (-)-alpha-pinene biosynthesis; (-)-alpha-pinene from geranyl diphosphate: step 1/1. In terms of biological role, involved in monoterpene (C10) olefins biosynthesis, constituants of cannabinoids and terpenoids-rich resins. Catalyzes mainly the conversion of (2E)-geranyl diphosphate to (+)-alpha-pinene, and also produces minor products such as (-)-limonene, (+)-beta-pinene and beta-myrcene. This is (+)-alpha-pinene synthase TPS2, chloroplastic from Cannabis sativa (Hemp).